The following is a 621-amino-acid chain: MALLQISEPGESPAPHQRRLAVGIDLGTTNSLVASVRSSVPEVLPDDQGRPLLPSVVRYLPTGGAHIGYKAQAEAVRDPKNTIISVKRFMGRGLKDVAHIENTPYDFVDAPGMVQLKTVAGVKSPVEVSAEILATLRQRAEDTLGDELVGAVITVPAYFDDAQRQATKDAAKLAGLNVLRLLNEPTAAAIAYGLDNGSEGIYAVYDLGGGTFDISVLKLTKGVFEVMSTGGDSALGGDDFDQRIVCWVVEQAGLQPLSAEDTRLLLNKARAAKEWLSTADSTEIDAMLSTGETVHLVLTAETFAELTATLVQKTLSPVRRALRDAGVTVEDVKGVVLVGGATRMPIIRRAVGQLFGQTPLTNLDPDQVVAIGAAMQANLLAGNRAPGEDWLLLDVIPLSLGVETMGGLVEKIIPRNSTIPVARAQEFTTFKDGQTAMAIHVLQGERELASDCRSLARFELRGIPPMVAGAARIRVTYQVDADGLLSVSARETVSGVEASIAVKPSYGLGDDDVARMLQEGFQSAEDDMRRRALAEERVEGERLLEALSQALAADGDLLSPEERAAIDTEIAALRTTMQGEDHRAIKDAVDALSHGTDEFAARRMDRGIRKALAGKRIEELG.

It belongs to the heat shock protein 70 family.

In terms of biological role, chaperone involved in the maturation of iron-sulfur cluster-containing proteins. Has a low intrinsic ATPase activity which is markedly stimulated by HscB. The protein is Chaperone protein HscA homolog of Ralstonia pickettii (strain 12J).